Consider the following 283-residue polypeptide: Bifunctional protein FolD (283 aa).

166–168 (GAS) serves as a coordination point for NADP(+).

This sequence belongs to the tetrahydrofolate dehydrogenase/cyclohydrolase family. In terms of assembly, homodimer.

It catalyses the reaction (6R)-5,10-methylene-5,6,7,8-tetrahydrofolate + NADP(+) = (6R)-5,10-methenyltetrahydrofolate + NADPH. The enzyme catalyses (6R)-5,10-methenyltetrahydrofolate + H2O = (6R)-10-formyltetrahydrofolate + H(+). It functions in the pathway one-carbon metabolism; tetrahydrofolate interconversion. In terms of biological role, catalyzes the oxidation of 5,10-methylenetetrahydrofolate to 5,10-methenyltetrahydrofolate and then the hydrolysis of 5,10-methenyltetrahydrofolate to 10-formyltetrahydrofolate. In Coxiella burnetii (strain Dugway 5J108-111), this protein is Bifunctional protein FolD.